Consider the following 347-residue polypeptide: MMSLQLGTAGKERQLAEKSRDLQNVSMTEGSEEVSEMDHISDRPDEKDKPSENLQTDSLYKMDTEKWDGLEQESEHSQDPPSKPDEQEVTLVCEGPQVSQLSPSTDESTPIPESLTHKLNYWHAKMGLQMKELGADHGDWLERINNIIQNINNTESTVKSLLTEVISLENQSKNLEDSDQEADIEEKITEIRRQLKEVNIKLTQVDACEEARELKEKLVEQIESFHKEMNVLNSKLEMYYTQGSDADSHNSEDVDTEQEEPLVPEASPSLSASPTPPCSAVWKNALKLFVIVYVVTITGLSCYILFVDATFLFERVLPSVLGHRTMWDLREMMAPFLNLEAEDLLPS.

Residues Met-1–Val-89 form a disordered region. 3 stretches are compositionally biased toward basic and acidic residues: residues Gly-10–Asp-21, Glu-36–Ser-51, and Tyr-60–Glu-86. The stretch at Asp-139 to Met-238 forms a coiled coil. A Phosphoserine modification is found at Ser-178. The disordered stretch occupies residues Gly-243–Pro-274. The segment covering Asp-253–Leu-262 has biased composition (acidic residues). Over residues Val-263–Ser-273 the composition is skewed to low complexity. The chain crosses the membrane as a helical span at residues Leu-288–Asp-308.

It is found in the membrane. This chain is Single-pass membrane and coiled-coil domain-containing protein 2 (Smco2), found in Mus musculus (Mouse).